We begin with the raw amino-acid sequence, 195 residues long: Protein GrpE (195 aa).

Positions 1–30 (MSEQEKVEQEEISAELETQNEQEKPMEETE) are disordered. The span at 10–20 (EEISAELETQN) shows a compositional bias: acidic residues.

Belongs to the GrpE family. In terms of assembly, homodimer.

It is found in the cytoplasm. In terms of biological role, participates actively in the response to hyperosmotic and heat shock by preventing the aggregation of stress-denatured proteins, in association with DnaK and GrpE. It is the nucleotide exchange factor for DnaK and may function as a thermosensor. Unfolded proteins bind initially to DnaJ; upon interaction with the DnaJ-bound protein, DnaK hydrolyzes its bound ATP, resulting in the formation of a stable complex. GrpE releases ADP from DnaK; ATP binding to DnaK triggers the release of the substrate protein, thus completing the reaction cycle. Several rounds of ATP-dependent interactions between DnaJ, DnaK and GrpE are required for fully efficient folding. The polypeptide is Protein GrpE (Histophilus somni (strain 2336) (Haemophilus somnus)).